The following is a 209-amino-acid chain: Uracil phosphoribosyltransferase (209 aa).

5-phospho-alpha-D-ribose 1-diphosphate contacts are provided by residues Arg78, Arg103, and 130 to 138 (DPMFATGGT). Uracil is bound by residues Ile193 and 198 to 200 (GDA). Position 199 (Asp199) interacts with 5-phospho-alpha-D-ribose 1-diphosphate.

It belongs to the UPRTase family. It depends on Mg(2+) as a cofactor.

The catalysed reaction is UMP + diphosphate = 5-phospho-alpha-D-ribose 1-diphosphate + uracil. Its pathway is pyrimidine metabolism; UMP biosynthesis via salvage pathway; UMP from uracil: step 1/1. Its activity is regulated as follows. Allosterically activated by GTP. Catalyzes the conversion of uracil and 5-phospho-alpha-D-ribose 1-diphosphate (PRPP) to UMP and diphosphate. This chain is Uracil phosphoribosyltransferase, found in Campylobacter fetus subsp. fetus (strain 82-40).